The primary structure comprises 305 residues: Protoheme IX farnesyltransferase (305 aa).

9 helical membrane passes run 26-46, 47-67, 98-118, 119-139, 147-167, 174-194, 220-240, 243-263, and 284-304; these read VMSL…QPVN, PFVA…SGAL, LAVG…AANW, FAAG…TIWL, IVIG…CATG, LLMF…LALF, IFAY…TSVG, LYLA…WQIL, and LSLY…WVGG.

The protein belongs to the UbiA prenyltransferase family. Protoheme IX farnesyltransferase subfamily. In terms of assembly, interacts with CtaA.

Its subcellular location is the cell inner membrane. It catalyses the reaction heme b + (2E,6E)-farnesyl diphosphate + H2O = Fe(II)-heme o + diphosphate. Its pathway is porphyrin-containing compound metabolism; heme O biosynthesis; heme O from protoheme: step 1/1. Its function is as follows. Converts heme B (protoheme IX) to heme O by substitution of the vinyl group on carbon 2 of heme B porphyrin ring with a hydroxyethyl farnesyl side group. This is Protoheme IX farnesyltransferase from Paracoccus denitrificans (strain Pd 1222).